The primary structure comprises 267 residues: Alkaline ceramidase 3 (267 aa).

Residues 1–33 (MAPAVDRKGYWGPTTSTLDWCEENYVVTLFVAE) lie on the Cytoplasmic side of the membrane. Asp19, Trp20, Glu22, Asn24, and Glu33 together coordinate Ca(2+). The helical transmembrane segment at 34–55 (FWNTVSNLIMIIPPIFGAIQGI) threads the bilayer. Topologically, residues 56-61 (RDRLEK) are lumenal. The helical transmembrane segment at 62-82 (RYIAAYLALTVVGMGSWCFHM) threads the bilayer. Position 81 (His81) interacts with Zn(2+). Residues 83 to 87 (TLKYE) lie on the Cytoplasmic side of the membrane. A helical transmembrane segment spans residues 88–108 (MQLLDELPMIYSCCIFVYCMF). Residues 109–118 (ECFKTKSSIN) lie on the Lumenal side of the membrane. A helical transmembrane segment spans residues 119–139 (YHLLFTLFLYSLTVTTIYLKV). Topologically, residues 140–141 (KE) are cytoplasmic. The chain crosses the membrane as a helical span at residues 142 to 162 (PIFHQVMYGMLVFTLVLRSIY). At 163 to 173 (IVTWVYPWLRG) the chain is on the lumenal side. Residues 174 to 194 (LGYTSLTVFLLGFLLWNIDNI) form a helical membrane-spanning segment. At 195 to 215 (FCDSLRNFRKRVPPVLGVTTQ) the chain is on the cytoplasmic side. A helical transmembrane segment spans residues 216-236 (FHAWWHILTGLGSYLHILFSL). Residues His217 and His221 each coordinate Zn(2+). The Lumenal portion of the chain corresponds to 237 to 267 (YTRTLYLRYRPKVKFLFGIWPAVMFEPQRKH).

It belongs to the alkaline ceramidase family. Zn(2+) serves as cofactor. In terms of tissue distribution, up-regulated with age in cerebeLlum and cerebrum.

Its subcellular location is the endoplasmic reticulum membrane. It localises to the golgi apparatus membrane. The enzyme catalyses an N-acyl-(4R)-4-hydroxysphinganine + H2O = (4R)-hydroxysphinganine + a fatty acid. The catalysed reaction is N-(5Z,8Z,11Z,14Z-eicosatetraenoyl)-sphing-4-enine + H2O = sphing-4-enine + (5Z,8Z,11Z,14Z)-eicosatetraenoate. It catalyses the reaction N-(5Z,8Z,11Z,14Z-eicosatetraenoyl)-sphinganine + H2O = sphinganine + (5Z,8Z,11Z,14Z)-eicosatetraenoate. It carries out the reaction N-(5Z,8Z,11Z,14Z-eicosatetraenoyl)-(4R)-hydroxysphinganine + H2O = (4R)-hydroxysphinganine + (5Z,8Z,11Z,14Z)-eicosatetraenoate. The enzyme catalyses N-(11Z-eicosenoyl)-sphing-4-enine + H2O = (11Z)-eicosenoate + sphing-4-enine. The catalysed reaction is N-(11Z-eicosenoyl)-sphinganine + H2O = (11Z)-eicosenoate + sphinganine. It catalyses the reaction N-(11Z-eicosenoyl)-(4R)-hydroxysphinganine + H2O = (11Z)-eicosenoate + (4R)-hydroxysphinganine. It carries out the reaction N-(9Z-octadecenoyl)-sphing-4-enine + H2O = sphing-4-enine + (9Z)-octadecenoate. The enzyme catalyses N-(9Z-octadecenoyl)-sphinganine + H2O = sphinganine + (9Z)-octadecenoate. The catalysed reaction is N-(9Z-octadecenoyl)-(4R)-hydroxysphinganine + H2O = (4R)-hydroxysphinganine + (9Z)-octadecenoate. It catalyses the reaction an N-acylsphing-4-enine + H2O = sphing-4-enine + a fatty acid. It carries out the reaction an N-acylsphinganine + H2O = sphinganine + a fatty acid. Its pathway is lipid metabolism; sphingolipid metabolism. With respect to regulation, activated by Ca(2+) and inhibited by Zn(2+). Endoplasmic reticulum and Golgi ceramidase that catalyzes the hydrolysis of unsaturated long-chain C18:1-, C20:1- and C20:4-ceramides, dihydroceramides and phytoceramides into sphingoid bases like sphingosine and free fatty acids at alkaline pH. Ceramides, sphingosine, and its phosphorylated form sphingosine-1-phosphate are bioactive lipids that mediate cellular signaling pathways regulating several biological processes including cell proliferation, apoptosis and differentiation. Controls the generation of sphingosine in erythrocytes, and thereby sphingosine-1-phosphate in plasma. Through the regulation of ceramides and sphingosine-1-phosphate homeostasis in the brain may play a role in neurons survival and function. By regulating the levels of pro-inflammatory ceramides in immune cells and tissues, may modulate the inflammatory response. This chain is Alkaline ceramidase 3 (Acer3), found in Mus musculus (Mouse).